Here is a 608-residue protein sequence, read N- to C-terminus: RAS guanyl-releasing protein 2 (608 aa).

Positions 4 to 126 (TLDLDKGCTV…SLIDIESVPT (123 aa)) constitute an N-terminal Ras-GEF domain. 3 positions are modified to phosphoserine: Ser-116, Ser-117, and Ser-147. The Ras-GEF domain maps to 154–387 (EPMELAEHLT…YQLSLQREPR (234 aa)). The tract at residues 382–405 (LQREPRSKSSPTSPTSCTPPPRPP) is disordered. 2 EF-hand domains span residues 426-461 (HIEKMVESVFRNFDVDGDGHISQEEFQIIRGNFPYL) and 463-490 (AFGDLDQNQDGCISREEMISYFLRSSSV). Asp-439, Asp-441, Asp-443, His-445, Glu-450, Asp-468, Asn-470, Asp-472, Cys-474, and Glu-479 together coordinate Ca(2+). Residues 498–548 (VHNFQESNSLRPVACRHCKALILGIYKQGLKCRACGVNCHKQCKERLSVEC) form a Phorbol-ester/DAG-type zinc finger. A phosphoserine mark is found at Ser-554 and Ser-575. A disordered region spans residues 555-596 (VSLEGSAPSPSPTHTHHRAFSFSLPRPGRRSSRPPEIREEEV).

This sequence belongs to the RASGRP family. In terms of assembly, forms a signaling complex with RAP1 and BRAF. Interacts with F-actin. Interacts with RAP1. In terms of tissue distribution, detected in megakaryocytes, platelet and neutrophils but not in lymphocytes (at protein level). Isoform 1 and isoform 3 are detected in brain basal glanglia, heart, lung, spleen, liver and kidney interstitial cells.

It localises to the cytoplasm. It is found in the cytosol. The protein resides in the cell membrane. Its subcellular location is the synapse. The protein localises to the synaptosome. It localises to the cell projection. It is found in the ruffle membrane. Functionally, functions as a calcium- and DAG-regulated nucleotide exchange factor specifically activating Rap through the exchange of bound GDP for GTP. May also activate other GTPases such as RRAS, RRAS2, NRAS, KRAS but not HRAS. Functions in aggregation of platelets and adhesion of T-lymphocytes and neutrophils probably through inside-out integrin activation. May function in the muscarinic acetylcholine receptor M1/CHRM1 signaling pathway. This Mus musculus (Mouse) protein is RAS guanyl-releasing protein 2 (Rasgrp2).